Consider the following 468-residue polypeptide: Ribulose bisphosphate carboxylase large chain (468 aa).

Lys5 carries the N6,N6,N6-trimethyllysine modification. 2 residues coordinate substrate: Asn114 and Thr164. Lys166 (proton acceptor) is an active-site residue. Lys168 contacts substrate. Lys192, Asp194, and Glu195 together coordinate Mg(2+). The residue at position 192 (Lys192) is an N6-carboxylysine. His285 functions as the Proton acceptor in the catalytic mechanism. The substrate site is built by Arg286, His318, and Ser370.

The protein belongs to the RuBisCO large chain family. Type I subfamily. As to quaternary structure, heterohexadecamer of 8 large chains and 8 small chains; disulfide-linked. The disulfide link is formed within the large subunit homodimers. Mg(2+) serves as cofactor. Post-translationally, the disulfide bond which can form in the large chain dimeric partners within the hexadecamer appears to be associated with oxidative stress and protein turnover.

It localises to the plastid. Its subcellular location is the chloroplast. It carries out the reaction 2 (2R)-3-phosphoglycerate + 2 H(+) = D-ribulose 1,5-bisphosphate + CO2 + H2O. The enzyme catalyses D-ribulose 1,5-bisphosphate + O2 = 2-phosphoglycolate + (2R)-3-phosphoglycerate + 2 H(+). Functionally, ruBisCO catalyzes two reactions: the carboxylation of D-ribulose 1,5-bisphosphate, the primary event in carbon dioxide fixation, as well as the oxidative fragmentation of the pentose substrate in the photorespiration process. Both reactions occur simultaneously and in competition at the same active site. The sequence is that of Ribulose bisphosphate carboxylase large chain from Nolana spathulata (Chilean bell flower).